Here is a 154-residue protein sequence, read N- to C-terminus: Large ribosomal subunit protein uL23y (154 aa).

The protein belongs to the universal ribosomal protein uL23 family.

Binds to a specific region on the 26S rRNA. This is Large ribosomal subunit protein uL23y (RPL23AB) from Arabidopsis thaliana (Mouse-ear cress).